The sequence spans 642 residues: 1-deoxy-D-xylulose-5-phosphate synthase (642 aa).

Thiamine diphosphate contacts are provided by residues His-79 and 120 to 122; that span reads AHS. Residue Asp-151 participates in Mg(2+) binding. Residues 152-153, Asn-180, Tyr-290, and Glu-372 contribute to the thiamine diphosphate site; that span reads GS. Residue Asn-180 participates in Mg(2+) binding.

Belongs to the transketolase family. DXPS subfamily. In terms of assembly, homodimer. Mg(2+) serves as cofactor. The cofactor is thiamine diphosphate.

It catalyses the reaction D-glyceraldehyde 3-phosphate + pyruvate + H(+) = 1-deoxy-D-xylulose 5-phosphate + CO2. It participates in metabolic intermediate biosynthesis; 1-deoxy-D-xylulose 5-phosphate biosynthesis; 1-deoxy-D-xylulose 5-phosphate from D-glyceraldehyde 3-phosphate and pyruvate: step 1/1. Catalyzes the acyloin condensation reaction between C atoms 2 and 3 of pyruvate and glyceraldehyde 3-phosphate to yield 1-deoxy-D-xylulose-5-phosphate (DXP). The chain is 1-deoxy-D-xylulose-5-phosphate synthase from Beijerinckia indica subsp. indica (strain ATCC 9039 / DSM 1715 / NCIMB 8712).